A 404-amino-acid chain; its full sequence is NADH-quinone oxidoreductase subunit D (404 aa).

This sequence belongs to the complex I 49 kDa subunit family. NDH-1 is composed of 14 different subunits. Subunits NuoB, C, D, E, F, and G constitute the peripheral sector of the complex.

The protein resides in the cell inner membrane. It carries out the reaction a quinone + NADH + 5 H(+)(in) = a quinol + NAD(+) + 4 H(+)(out). NDH-1 shuttles electrons from NADH, via FMN and iron-sulfur (Fe-S) centers, to quinones in the respiratory chain. The immediate electron acceptor for the enzyme in this species is believed to be ubiquinone. Couples the redox reaction to proton translocation (for every two electrons transferred, four hydrogen ions are translocated across the cytoplasmic membrane), and thus conserves the redox energy in a proton gradient. This is NADH-quinone oxidoreductase subunit D from Leptospira borgpetersenii serovar Hardjo-bovis (strain JB197).